We begin with the raw amino-acid sequence, 429 residues long: Guanine nucleotide-binding protein subunit alpha (429 aa).

Glycine 2 carries N-myristoyl glycine lipidation. A lipid anchor (S-palmitoyl cysteine) is attached at cysteine 3. In terms of domain architecture, G-alpha spans 40 to 429 (KGVKLLLLGA…QQNLKKSGIM (390 aa)). Residues 43 to 56 (KLLLLGAGESGKST) form a G1 motif region. Glutamate 51, serine 52, glycine 53, lysine 54, serine 55, and threonine 56 together coordinate GTP. Residue serine 55 participates in Mg(2+) binding. Residues 125–197 (LKQIDADVAG…KDSEQFTRLS (73 aa)) form a not present in other G-proteins region. The interval 249 to 257 (DILKGRIKT) is G2 motif. GTP-binding residues include leucine 251, threonine 257, glycine 279, asparagine 345, lysine 346, aspartate 348, and alanine 401. Threonine 257 is a binding site for Mg(2+). The segment at 272–281 (FKVLDAGGQR) is G3 motif. The G4 motif stretch occupies residues 341-348 (ILFLNKID). The segment at 399–404 (TCATDS) is G5 motif.

It belongs to the G-alpha family. G(q) subfamily. G proteins are composed of 3 units; alpha, beta and gamma. The alpha chain contains the guanine nucleotide binding site. Requires Mg(2+) as cofactor.

Guanine nucleotide-binding proteins (G proteins) are involved as modulators or transducers in various transmembrane signaling systems. Involved in the mating pathway. This chain is Guanine nucleotide-binding protein subunit alpha (CAG1), found in Candida albicans (strain WO-1) (Yeast).